Reading from the N-terminus, the 49-residue chain is Large ribosomal subunit protein bL33 (49 aa).

Residues 18–49 (ITTKNKRNNPERLELKKYSPRLKRTTLHRETK) are disordered. Positions 25 to 34 (NNPERLELKK) are enriched in basic and acidic residues.

The protein belongs to the bacterial ribosomal protein bL33 family.

The chain is Large ribosomal subunit protein bL33 from Lysinibacillus sphaericus (strain C3-41).